The sequence spans 486 residues: Maintenance of mitochondrial morphology protein 1 (486 aa).

Residues 1–23 are Lumenal-facing; the sequence is MSQHSQYDAPGVPVQPSLSFTQG. The helical transmembrane segment at 24-44 threads the bilayer; it reads FLLGQLSVVLLIGAFIKFFIF. Over 45–486 the chain is Cytoplasmic; the sequence is GEAPAPPSRG…PGSMPGGRAQ (442 aa). The tract at residues 52 to 103 is disordered; sequence SRGLASRTASHHRSYSINQGDNNVSNNNTSGGSPRTLCEKPSTSNVLRPVPS. Residues 67 to 84 show a composition bias toward low complexity; it reads SINQGDNNVSNNNTSGGS. The span at 92-103 shows a compositional bias: polar residues; the sequence is PSTSNVLRPVPS. An SMP-LTD domain is found at 140 to 389; that stretch reads QPESLDWFNV…EPRVQVVGLP (250 aa). Residues 413–426 show a composition bias toward low complexity; the sequence is AAASASSRGGAPEA. Residues 413-486 are disordered; that stretch reads AAASASSRGG…PGSMPGGRAQ (74 aa).

The protein belongs to the MMM1 family. Homodimer. Component of the ER-mitochondria encounter structure (ERMES) or MDM complex, composed of mmm1, mdm10, mdm12 and mdm34. A mmm1 homodimer associates with one molecule of mdm12 on each side in a pairwise head-to-tail manner, and the SMP-LTD domains of mmm1 and mdm12 generate a continuous hydrophobic tunnel for phospholipid trafficking.

It is found in the endoplasmic reticulum membrane. Functionally, component of the ERMES/MDM complex, which serves as a molecular tether to connect the endoplasmic reticulum (ER) and mitochondria. Components of this complex are involved in the control of mitochondrial shape and protein biogenesis, and function in nonvesicular lipid trafficking between the ER and mitochondria. The mdm12-mmm1 subcomplex functions in the major beta-barrel assembly pathway that is responsible for biogenesis of all outer membrane beta-barrel proteins, and acts in a late step after the SAM complex. The mdm10-mdm12-mmm1 subcomplex further acts in the TOM40-specific pathway after the action of the mdm12-mmm1 complex. Essential for establishing and maintaining the structure of mitochondria and maintenance of mtDNA nucleoids. In Talaromyces marneffei (strain ATCC 18224 / CBS 334.59 / QM 7333) (Penicillium marneffei), this protein is Maintenance of mitochondrial morphology protein 1.